The primary structure comprises 442 residues: 3-phosphoshikimate 1-carboxyvinyltransferase (442 aa).

Positions 1 to 11 (MQVSRPLTVSA) are enriched in polar residues. Positions 1–25 (MQVSRPLTVSASPKGLSGRTRVPGD) are disordered. 3-phosphoshikimate-binding residues include Lys-26, Ser-27, and Arg-31. Lys-26 contributes to the phosphoenolpyruvate binding site. 2 residues coordinate phosphoenolpyruvate: Gly-98 and Arg-126. 3-phosphoshikimate is bound by residues Ser-171, Gln-173, Asp-324, and Lys-351. Position 173 (Gln-173) interacts with phosphoenolpyruvate. Residue Asp-324 is the Proton acceptor of the active site. Positions 355 and 398 each coordinate phosphoenolpyruvate.

This sequence belongs to the EPSP synthase family. As to quaternary structure, monomer.

Its subcellular location is the cytoplasm. It catalyses the reaction 3-phosphoshikimate + phosphoenolpyruvate = 5-O-(1-carboxyvinyl)-3-phosphoshikimate + phosphate. It participates in metabolic intermediate biosynthesis; chorismate biosynthesis; chorismate from D-erythrose 4-phosphate and phosphoenolpyruvate: step 6/7. Functionally, catalyzes the transfer of the enolpyruvyl moiety of phosphoenolpyruvate (PEP) to the 5-hydroxyl of shikimate-3-phosphate (S3P) to produce enolpyruvyl shikimate-3-phosphate and inorganic phosphate. The sequence is that of 3-phosphoshikimate 1-carboxyvinyltransferase from Gluconobacter oxydans (strain 621H) (Gluconobacter suboxydans).